Reading from the N-terminus, the 258-residue chain is Transmembrane O-methyltransferase homolog (258 aa).

S-adenosyl-L-methionine is bound by residues glutamate 104, glycine 106–threonine 107, serine 112, glutamate 130, and serine 160.

Belongs to the class I-like SAM-binding methyltransferase superfamily. Cation-dependent O-methyltransferase family. As to quaternary structure, interacts with LHFPL5, PCDH15, TMC1, TMC2 and TMIE. Interacts directly with TMC1. The interaction of TOMT with TMC1 and TMC2 is required for the transportation of TMC1/2 into the stereocilia of hair cells.

It localises to the cytoplasm. It is found in the endoplasmic reticulum. The enzyme catalyses a catechol + S-adenosyl-L-methionine = a guaiacol + S-adenosyl-L-homocysteine + H(+). Its function is as follows. Catalyzes the O-methylation, and thereby the inactivation, of catecholamine neurotransmitters and catechol hormones. Required for auditory function. Component of the cochlear hair cell's mechanotransduction (MET) machinery. Involved in the assembly of the asymmetric tip-link MET complex. Required for transportation of TMC1 and TMC2 proteins into the mechanically sensitive stereocilia of the hair cells. The function in MET is independent of the enzymatic activity. This Rattus norvegicus (Rat) protein is Transmembrane O-methyltransferase homolog.